The chain runs to 213 residues: Receptor-binding cancer antigen expressed on SiSo cells (213 aa).

Residues 1 to 6 are Extracellular-facing; it reads MAITQF. The chain crosses the membrane as a helical; Signal-anchor for type III membrane protein span at residues 7–27; sequence RLFKFCTCLATVFSFLKRLIC. The Cytoplasmic segment spans residues 28-213; sequence RSGRGRKLSG…EQNKIGVKLS (186 aa). S36 carries the phosphoserine modification. T41 carries the post-translational modification Phosphothreonine. Y94 carries the post-translational modification Phosphotyrosine. The stretch at 163–211 forms a coiled coil; it reads EDAAWQAEEVLRQQKLADREKRAAEQQRKKMEKEAQRLMKKEQNKIGVK. Over residues 178-206 the composition is skewed to basic and acidic residues; sequence LADREKRAAEQQRKKMEKEAQRLMKKEQN. The disordered stretch occupies residues 178–213; it reads LADREKRAAEQQRKKMEKEAQRLMKKEQNKIGVKLS.

As to quaternary structure, homodimer. In terms of tissue distribution, widely expressed. Expressed in ovary, testis, prostate, thymus, muscle and heart, but not in small intestine, colon, lymph nodes, or peripherical blood lymphocytes. The protein is not detected in any of the above organs.

Its subcellular location is the golgi apparatus membrane. Its function is as follows. May participate in suppression of cell proliferation and induces apoptotic cell death through activation of interleukin-1-beta converting enzyme (ICE)-like proteases. This is Receptor-binding cancer antigen expressed on SiSo cells (EBAG9) from Homo sapiens (Human).